We begin with the raw amino-acid sequence, 157 residues long: 2-C-methyl-D-erythritol 2,4-cyclodiphosphate synthase (157 aa).

Positions 8 and 10 each coordinate a divalent metal cation. Residues 8–10 (DVH) and 34–35 (HS) each bind 4-CDP-2-C-methyl-D-erythritol 2-phosphate. Residue His42 coordinates a divalent metal cation. Residues 56–58 (DIG), 61–65 (FPDTD), 132–135 (TTTE), Phe139, and Arg142 contribute to the 4-CDP-2-C-methyl-D-erythritol 2-phosphate site.

The protein belongs to the IspF family. In terms of assembly, homotrimer. The cofactor is a divalent metal cation.

The enzyme catalyses 4-CDP-2-C-methyl-D-erythritol 2-phosphate = 2-C-methyl-D-erythritol 2,4-cyclic diphosphate + CMP. It functions in the pathway isoprenoid biosynthesis; isopentenyl diphosphate biosynthesis via DXP pathway; isopentenyl diphosphate from 1-deoxy-D-xylulose 5-phosphate: step 4/6. Its function is as follows. Involved in the biosynthesis of isopentenyl diphosphate (IPP) and dimethylallyl diphosphate (DMAPP), two major building blocks of isoprenoid compounds. Catalyzes the conversion of 4-diphosphocytidyl-2-C-methyl-D-erythritol 2-phosphate (CDP-ME2P) to 2-C-methyl-D-erythritol 2,4-cyclodiphosphate (ME-CPP) with a corresponding release of cytidine 5-monophosphate (CMP). The chain is 2-C-methyl-D-erythritol 2,4-cyclodiphosphate synthase from Geobacter metallireducens (strain ATCC 53774 / DSM 7210 / GS-15).